Reading from the N-terminus, the 532-residue chain is Tegument protein UL21 (532 aa).

The disordered stretch occupies residues 251–276; that stretch reads SPSVSSAPPPSAPDASLPPPGLQEAA. Over residues 257–276 the composition is skewed to pro residues; that stretch reads APPPSAPDASLPPPGLQEAA.

It belongs to the alphaherpesvirinae UL21 protein family. Interacts (via C-terminus) with UL16.

It is found in the virion tegument. The protein resides in the host cytoplasm. It localises to the host nucleus. May participate in DNA packaging/capsid maturation events. Promotes efficient incorporation of tegument proteins UL46, UL49, and US3 into virions. May also play a role in capsid transport to the trans-Golgi network (TGN). This is Tegument protein UL21 from Human herpesvirus 2 (strain HG52) (HHV-2).